Here is an 824-residue protein sequence, read N- to C-terminus: Leucine--tRNA ligase (824 aa).

Residues 42-52 (PYPSGKIHMGH) carry the 'HIGH' region motif. The short motif at 581–585 (KMSKS) is the 'KMSKS' region element. K584 lines the ATP pocket.

This sequence belongs to the class-I aminoacyl-tRNA synthetase family.

It is found in the cytoplasm. It carries out the reaction tRNA(Leu) + L-leucine + ATP = L-leucyl-tRNA(Leu) + AMP + diphosphate. The protein is Leucine--tRNA ligase of Geobacter sp. (strain M21).